The primary structure comprises 336 residues: Tryptophan--tRNA ligase (336 aa).

ATP contacts are provided by residues 9-11 (QPS) and 17-18 (GN). Positions 10-18 (PSGTPTIGN) match the 'HIGH' region motif. Asp-134 is an L-tryptophan binding site. Residues 146–148 (GDD), Ile-189, and 198–202 (KMSKS) each bind ATP. The short motif at 198-202 (KMSKS) is the 'KMSKS' region element.

It belongs to the class-I aminoacyl-tRNA synthetase family. Homodimer.

Its subcellular location is the cytoplasm. It catalyses the reaction tRNA(Trp) + L-tryptophan + ATP = L-tryptophyl-tRNA(Trp) + AMP + diphosphate + H(+). Its function is as follows. Catalyzes the attachment of tryptophan to tRNA(Trp). In Enterococcus faecalis (strain ATCC 700802 / V583), this protein is Tryptophan--tRNA ligase.